A 166-amino-acid polypeptide reads, in one-letter code: Deglycase PfpI (166 aa).

Positions 1 to 166 (MKILFLSANE…WMREFVKLLK (166 aa)) constitute a PfpI endopeptidase domain. The Nucleophile role is filled by Cys100. The active site involves His101.

Belongs to the peptidase C56 family. In terms of assembly, homooligomer. Exists in two functional species: the predominant form is a homohexamer that comprises about 90% of the total activity, and the minor form is trimeric.

It is found in the cytoplasm. It catalyses the reaction N(omega)-(1-hydroxy-2-oxopropyl)-L-arginyl-[protein] + H2O = lactate + L-arginyl-[protein] + H(+). The catalysed reaction is N(6)-(1-hydroxy-2-oxopropyl)-L-lysyl-[protein] + H2O = lactate + L-lysyl-[protein] + H(+). The enzyme catalyses S-(1-hydroxy-2-oxopropyl)-L-cysteinyl-[protein] + H2O = lactate + L-cysteinyl-[protein] + H(+). It carries out the reaction N(omega)-(1-hydroxy-2-oxoethyl)-L-arginyl-[protein] + H2O = L-arginyl-[protein] + glycolate + H(+). It catalyses the reaction N(6)-(1-hydroxy-2-oxoethyl)-L-lysyl-[protein] + H2O = glycolate + L-lysyl-[protein] + H(+). The catalysed reaction is S-(1-hydroxy-2-oxoethyl)-L-cysteinyl-[protein] + H2O = glycolate + L-cysteinyl-[protein] + H(+). Deglycase that catalyzes the deglycation of the Maillard adducts formed between amino groups of proteins and reactive carbonyl groups of glyoxals. Thus, functions as a protein deglycase that repairs methylglyoxal- and glyoxal-glycated proteins, and releases repaired proteins and lactate or glycolate, respectively. Deglycates cysteine, arginine and lysine residues in proteins, and thus reactivates these proteins by reversing glycation by glyoxals. Thus, was shown to afford full protection against glycation of thioredoxin by glyoxal. Acts on early glycation intermediates (hemithioacetals and aminocarbinols), preventing the formation of advanced glycation endproducts (AGE) that cause irreversible damage. Prevents acrylamide formation in asparagine/glyoxal and asparagine/sugar mixtures, likely by degrading asparagine/glyoxal Maillard adducts formed at high temperatures. Also displays proteolytic activity. Cleaves at the carboxyl side of both basic and hydrophobic residues in the P1 position, indicating trypsin- and chymotrypsin-like specificities. This Pyrococcus furiosus (strain ATCC 43587 / DSM 3638 / JCM 8422 / Vc1) protein is Deglycase PfpI.